A 1029-amino-acid polypeptide reads, in one-letter code: U2 snRNP-associated SURP motif-containing protein (1029 aa).

2 disordered regions span residues 1–111 and 141–274; these read MADK…EDEK and VNAA…PSTT. Ala2 is subject to N-acetylalanine. The span at 7-16 shows a compositional bias: polar residues; it reads GGSQKASSKT. Over residues 45-54 the composition is skewed to basic residues; that stretch reads TRPKSPRKHN. The span at 55-64 shows a compositional bias: basic and acidic residues; sequence YRNESARESL. Position 67 is a phosphoserine (Ser67). Lys80 participates in a covalent cross-link: Glycyl lysine isopeptide (Lys-Gly) (interchain with G-Cter in SUMO2). Residues 92-121 are a coiled coil; the sequence is AKRTLSKKEQEELKKKEDEKAAAEIYEEFL. 2 stretches are compositionally biased toward basic and acidic residues: residues 97-111 and 144-155; these read SKKEQEELKKKEDEK and AKEEHETDEKRG. Glycyl lysine isopeptide (Lys-Gly) (interchain with G-Cter in SUMO2) cross-links involve residues Lys145 and Lys168. Residues 169–178 are compositionally biased toward polar residues; that stretch reads NPPNQSSNER. Positions 186–222 are enriched in basic and acidic residues; the sequence is ETKKPPLKKGEKEKKKSNLELFKEELKQIQEERDERH. Positions 192-232 form a coiled coil; sequence LKKGEKEKKKSNLELFKEELKQIQEERDERHKTKGRLSRFE. Ser202 carries the post-translational modification Phosphoserine. Lys208 is covalently cross-linked (Glycyl lysine isopeptide (Lys-Gly) (interchain with G-Cter in SUMO2)). Ser236 is modified (phosphoserine). Residues 239–249 show a composition bias toward basic and acidic residues; it reads DGQRRSMDAPS. The RRM domain maps to 274 to 355; sequence TNLYLGNINP…FEMKLGWGKA (82 aa). The stretch at 430–473 is one SURP motif repeat; it reads LIHRMIEFVVREGPMFEAMIMNREINNPMFRFLFENQTPAHVYY. Ser485 is modified (phosphoserine). Positions 534–679 constitute a CID domain; it reads LKEEQRDKLE…KLQNIFLGLV (146 aa). Thr719 is subject to Phosphothreonine. Residues Lys748 and Lys749 each participate in a glycyl lysine isopeptide (Lys-Gly) (interchain with G-Cter in SUMO2) cross-link. An N6-acetyllysine; alternate modification is found at Lys760. Residue Lys760 forms a Glycyl lysine isopeptide (Lys-Gly) (interchain with G-Cter in SUMO2); alternate linkage. Disordered regions lie at residues 778 to 841 and 855 to 1029; these read KWEL…EEKR and QDEL…KNKH. Residues 786 to 806 show a composition bias toward acidic residues; the sequence is EESEEEENQNQEEESEDEEDT. 3 positions are modified to phosphoserine: Ser788, Ser800, and Ser811. 2 stretches are compositionally biased toward basic and acidic residues: residues 810-841 and 874-922; these read KSEEHHLYSNPIKEEMTESKFSKYSEMSEEKR and QVEH…TPTR. Glycyl lysine isopeptide (Lys-Gly) (interchain with G-Cter in SUMO2) cross-links involve residues Lys822, Lys829, and Lys832. A coiled-coil region spans residues 837–915; the sequence is SEEKRAKLRE…ESRSKDKKEK (79 aa). A Phosphothreonine modification is found at Thr931. 2 positions are modified to phosphoserine: Ser946 and Ser948. Positions 950–980 are enriched in basic and acidic residues; the sequence is KSERSERSERSHKESSRSRSSHKDSPRDVSK. Basic residues predominate over residues 991–1029; the sequence is TPKRSRRSRSRSPKKSGKKSRSQSRSPHRSHKKSKKNKH.

The protein belongs to the splicing factor SR family. Interacts with ERBB4.

The protein resides in the nucleus. The polypeptide is U2 snRNP-associated SURP motif-containing protein (U2SURP) (Homo sapiens (Human)).